A 394-amino-acid chain; its full sequence is Dihydroorotase (394 aa).

Positions 15, 17, 98, 135, 175, and 245 each coordinate Zn(2+). An N6-carboxylysine modification is found at Lys98.

It belongs to the metallo-dependent hydrolases superfamily. DHOase family. Class II DHOase subfamily. Zn(2+) is required as a cofactor.

The catalysed reaction is (S)-dihydroorotate + H2O = N-carbamoyl-L-aspartate + H(+). Its pathway is pyrimidine metabolism; UMP biosynthesis via de novo pathway; (S)-dihydroorotate from bicarbonate: step 3/3. This chain is Dihydroorotase (PYR3), found in Mycosarcoma maydis (Corn smut fungus).